The following is a 419-amino-acid chain: uncharacterized protein (419 aa).

13 helical membrane passes run 5-25 (MIIVFCALMMLAVPVGYALII), 26-46 (AAGVAVLFNGYLPLSIVAQQI), 53-73 (FPMLALPFFMLAGTLMLGGEL), 102-122 (VFGGVSGSAVANASALGSVLI), 144-164 (VIDVLIPPSIPMILFSLVSGV), 170-190 (FVAGILPGILMAASFVFVCWF), 210-230 (ATLALKSLPAVLLPVLIILFL), 234-254 (LATPTEVAVLSVVYSLALSLL), 274-294 (ATGVVMLVIMGSAAVGWVLTF), 309-329 (ISSPIVIILMMNILMLIVGMP), 332-352 (MPPAILLLGPIFVPLADTIGL), 360-380 (MMVINLGIGLYTPPIGTTLFI), and 396-416 (LWPFFAMAMTLLLAVSFIPAL).

This sequence belongs to the YiaN/YgiK family.

It localises to the cell inner membrane. This is an uncharacterized protein from Sinorhizobium fredii (strain NBRC 101917 / NGR234).